Consider the following 329-residue polypeptide: Phospho-N-acetylmuramoyl-pentapeptide-transferase (329 aa).

Helical transmembrane passes span 1–21 (MLLNGIVAAVITMIITIIGIP), 53–73 (MGGFVFVVVSLVVSLVAALVF), 76–96 (FSPAFITAWWVFAMYAVIGFL), 109–129 (GLTAKQKMLAQILIGIVSYFI), 141–161 (ILSWQVNIGIFFSIFIIIWLV), 175–195 (GLASITVAISLTAYAVIAVVH), 198–218 (YDVLLIILSVIGGLLGFFVFN), 237–257 (FLAIVSILLHAEWTLLLIGAV), and 309–329 (IVFWLFTAVLSVIALCIYFAF).

Belongs to the glycosyltransferase 4 family. MraY subfamily. Mg(2+) is required as a cofactor.

It localises to the cell membrane. The enzyme catalyses UDP-N-acetyl-alpha-D-muramoyl-L-alanyl-gamma-D-glutamyl-L-lysyl-D-alanyl-D-alanine + di-trans,octa-cis-undecaprenyl phosphate = Mur2Ac(oyl-L-Ala-gamma-D-Glu-L-Lys-D-Ala-D-Ala)-di-trans,octa-cis-undecaprenyl diphosphate + UMP. Its pathway is cell wall biogenesis; peptidoglycan biosynthesis. In terms of biological role, catalyzes the initial step of the lipid cycle reactions in the biosynthesis of the cell wall peptidoglycan: transfers peptidoglycan precursor phospho-MurNAc-pentapeptide from UDP-MurNAc-pentapeptide onto the lipid carrier undecaprenyl phosphate, yielding undecaprenyl-pyrophosphoryl-MurNAc-pentapeptide, known as lipid I. The polypeptide is Phospho-N-acetylmuramoyl-pentapeptide-transferase (Lactococcus lactis subsp. cremoris (strain MG1363)).